A 421-amino-acid chain; its full sequence is Glucose-1-phosphate adenylyltransferase (421 aa).

Alpha-D-glucose 1-phosphate is bound by residues tyrosine 108, glycine 173, 188 to 189 (EK), and serine 206.

This sequence belongs to the bacterial/plant glucose-1-phosphate adenylyltransferase family. In terms of assembly, homotetramer.

It carries out the reaction alpha-D-glucose 1-phosphate + ATP + H(+) = ADP-alpha-D-glucose + diphosphate. The protein operates within glycan biosynthesis; glycogen biosynthesis. Involved in the biosynthesis of ADP-glucose, a building block required for the elongation reactions to produce glycogen. Catalyzes the reaction between ATP and alpha-D-glucose 1-phosphate (G1P) to produce pyrophosphate and ADP-Glc. The polypeptide is Glucose-1-phosphate adenylyltransferase (Mesorhizobium japonicum (strain LMG 29417 / CECT 9101 / MAFF 303099) (Mesorhizobium loti (strain MAFF 303099))).